A 617-amino-acid polypeptide reads, in one-letter code: Vacuolar protein sorting-associated protein 33B (617 aa).

Ala-2 carries the N-acetylalanine modification.

Belongs to the STXBP/unc-18/SEC1 family. As to quaternary structure, interacts with RAB11A and VIPAS39. Associates with adaptor protein complex 3 (AP-3), clathrin:AP-3 and clathrin:HGS complexes. Post-translationally, phosphorylated on tyrosine residues. In terms of tissue distribution, ubiquitous.

It is found in the late endosome membrane. The protein resides in the lysosome membrane. Its subcellular location is the early endosome. The protein localises to the cytoplasmic vesicle. It localises to the clathrin-coated vesicle. It is found in the recycling endosome. Its function is as follows. May play a role in vesicle-mediated protein trafficking to lysosomal compartments and in membrane docking/fusion reactions of late endosomes/lysosomes. Mediates phagolysosomal fusion in macrophages. Proposed to be involved in endosomal maturation implicating VIPAS39. In epithelial cells, the VPS33B:VIPAS39 complex may play a role in the apical recycling pathway and in the maintenance of the apical-basolateral polarity. Seems to be involved in the sorting of specific cargos from the trans-Golgi network to alpha-granule-destined multivesicular bodies (MVBs) promoting MVBs maturation in megakaryocytes. This is Vacuolar protein sorting-associated protein 33B (Vps33b) from Rattus norvegicus (Rat).